The following is a 436-amino-acid chain: Tubulin epsilon and delta complex protein 2 (436 aa).

Disordered stretches follow at residues 53–76 and 94–191; these read ARTP…PSSQ and VRKG…PSSA. Residues 111–131 are compositionally biased toward low complexity; sequence TSKAATSGAAAASHPRAPSRG. A compositionally biased stretch (basic and acidic residues) spans 153–170; the sequence is DYPEHRLRSKGDKTHVRT. At S161 the chain carries Phosphoserine.

As to quaternary structure, interacts with TEDC1. Found in a complex with TEDC1, TEDC2, TUBE1 and TUBD1.

It is found in the cell projection. Its subcellular location is the cilium. The protein resides in the cytoplasm. The protein localises to the cytoskeleton. It localises to the microtubule organizing center. It is found in the centrosome. Its subcellular location is the centriole. In terms of biological role, acts as a positive regulator of ciliary hedgehog signaling. Required for centriole stability. This Mus musculus (Mouse) protein is Tubulin epsilon and delta complex protein 2.